A 255-amino-acid polypeptide reads, in one-letter code: Putative cysteine-rich repeat secretory protein 13 (255 aa).

The first 21 residues, M1–S21, serve as a signal peptide directing secretion. 2 Gnk2-homologous domains span residues Y28 to T136 and Y142 to F252.

This sequence belongs to the cysteine-rich repeat secretory protein family.

It localises to the secreted. The chain is Putative cysteine-rich repeat secretory protein 13 (CRRSP13) from Arabidopsis thaliana (Mouse-ear cress).